A 365-amino-acid chain; its full sequence is Peptide chain release factor 2 (365 aa).

Position 249 is an N5-methylglutamine (glutamine 249).

Belongs to the prokaryotic/mitochondrial release factor family. Methylated by PrmC. Methylation increases the termination efficiency of RF2.

Its subcellular location is the cytoplasm. Functionally, peptide chain release factor 2 directs the termination of translation in response to the peptide chain termination codons UGA and UAA. This Acholeplasma laidlawii (strain PG-8A) protein is Peptide chain release factor 2.